The chain runs to 411 residues: DSEFAELKIRGKIFQLPILKASIGEDVIDISRVSAEVNCFTYDPGFMSTASCKSTITYIDGDKGILRHRGYNIKDLAEKSDFLEVAYLLIYGELPSIEQYNNFTKQVAHHSLVNERLHYLFQTFCSSSHPMAIMLAAIGSLSAFYPDLLNFKEADYELTAIRMIAKIPTIAAMSYKYSIGQPFVYPDNSLDFTENFLHMMFATPCTKYKVNPIIKNALNKIFILHADHEQNASTSTVRIAGSSGANAFACISTGIASLWGPAHGGANEAVINMLKEIGSSENIPKYIAKAKDKSDPFRLMGFGHRVYKNYDPRASVLKETCKEVLKELGQLENNPLLQIAIELEAIALKDEYFIERKLYPNVDFYSGIIYKAMGIPSQMFTVLFAIARTVGWMAQWKEMHEDPGQKISRPR.

Residues H304 and D363 contribute to the active site.

This sequence belongs to the citrate synthase family.

It carries out the reaction oxaloacetate + acetyl-CoA + H2O = citrate + CoA + H(+). The protein operates within carbohydrate metabolism; tricarboxylic acid cycle; isocitrate from oxaloacetate: step 1/2. In Rickettsia akari, this protein is Citrate synthase (gltA).